The sequence spans 577 residues: Moesin (577 aa).

The FERM domain occupies 2–295 (PKTISVRVTT…GNHELYMRRR (294 aa)). Phosphoserine is present on S74. K79 is subject to N6-acetyllysine. K83 bears the N6-succinyllysine mark. A [IL]-x-C-x-x-[DE] motif motif is present at residues 115-120 (IYCPPE). Y116 is modified (phosphotyrosine). C117 bears the S-nitrosocysteine mark. K139 and K165 each carry N6-acetyllysine. Disordered stretches follow at residues 323 to 342 (LENE…KIER), 375 to 409 (LEQE…ASRD), and 466 to 518 (AMST…NERV). Residues 375 to 401 (LEQERKRAQSEAEKLAKERQEAEEAKE) show a composition bias toward basic and acidic residues. S407 bears the Phosphoserine mark. The segment covering 476–487 (AENEQDEQDENG) has biased composition (acidic residues). Positions 492 to 518 (ADLRADAMAKDRSEEERTTEAEKNERV) are enriched in basic and acidic residues. S527 bears the Phosphoserine mark. T558 carries the post-translational modification Phosphothreonine; by ROCK2 and STK10.

In resting T-cells, part of a PAG1-NHERF1-MSN complex which is disrupted upon TCR activation. Interacts with NHERF1. Interacts with PPP1R16B. Interacts with SELPLG and SYK; these interactions mediate the activation of SYK by SELPLG. Interacts with PDPN (via cytoplasmic domain); this interaction activates RHOA and promotes epithelial-mesenchymal transition. Interacts with SPN/CD43 cytoplasmic tail. Interacts with CD44. Interacts with ICAM2. Interacts with ICAM3 (via C-terminus). Interacts with PDZD8. Interacts with F-actin. Interacts with CD46. Interacts with PTPN6. In terms of assembly, (Microbial infection) Interacts with HIV-1 envelope protein gp120. In terms of processing, phosphorylation on Thr-558 is crucial for the formation of microvilli-like structures. Phosphorylation by ROCK2 suppresses the head-to-tail association of the N-terminal and C-terminal halves resulting in an opened conformation which is capable of actin and membrane-binding. Phosphorylation on Thr-558 by STK10 negatively regulates lymphocyte migration and polarization. Post-translationally, S-nitrosylation of Cys-117 is induced by interferon-gamma and oxidatively-modified low-densitity lipoprotein (LDL(ox)) implicating the iNOS-S100A8/9 transnitrosylase complex. In terms of tissue distribution, in all tissues and cultured cells studied.

The protein resides in the cell membrane. It localises to the cytoplasm. The protein localises to the cytoskeleton. It is found in the apical cell membrane. Its subcellular location is the cell projection. The protein resides in the microvillus membrane. It localises to the microvillus. A head-to-tail association, of the N-terminal and C-terminal halves results in a closed conformation (inactive form) which is incapable of actin or membrane-binding. In terms of biological role, ezrin-radixin-moesin (ERM) family protein that connects the actin cytoskeleton to the plasma membrane and thereby regulates the structure and function of specific domains of the cell cortex. Tethers actin filaments by oscillating between a resting and an activated state providing transient interactions between moesin and the actin cytoskeleton. Once phosphorylated on its C-terminal threonine, moesin is activated leading to interaction with F-actin and cytoskeletal rearrangement. These rearrangements regulate many cellular processes, including cell shape determination, membrane transport, and signal transduction. The role of moesin is particularly important in immunity acting on both T and B-cells homeostasis and self-tolerance, regulating lymphocyte egress from lymphoid organs. Modulates phagolysosomal biogenesis in macrophages. Also participates in immunologic synapse formation. In Homo sapiens (Human), this protein is Moesin.